The chain runs to 55 residues: Large ribosomal subunit protein bL33 (55 aa).

The protein belongs to the bacterial ribosomal protein bL33 family.

This chain is Large ribosomal subunit protein bL33, found in Xanthobacter autotrophicus (strain ATCC BAA-1158 / Py2).